The chain runs to 696 residues: Lutropin-choriogonadotropic hormone receptor (696 aa).

The signal sequence occupies residues M1–G27. Residues A28–G358 are Extracellular-facing. N-linked (GlcNAc...) asparagine glycosylation occurs at N99. 6 LRR repeats span residues L122–S147, F149–G171, M172–G196, T198–G220, A221–S244, and A250–A271. N-linked (GlcNAc...) asparagine glycosylation is found at N174 and N195. N291, N299, and N313 each carry an N-linked (GlcNAc...) asparagine glycan. Y331 bears the Sulfotyrosine mark. Residues Y359–T386 form a helical membrane-spanning segment. Residues S387–R395 are Cytoplasmic-facing. Residues F396–V418 form a helical membrane-spanning segment. At D419–C439 the chain is on the extracellular side. A disulfide bridge links C439 with C514. Residues S440–L462 traverse the membrane as a helical segment. Over E463 to H482 the chain is Cytoplasmic. A helical membrane pass occupies residues A483–V505. The Extracellular segment spans residues S506–Q525. Residues V526 to I547 traverse the membrane as a helical segment. Over K548–K570 the chain is Cytoplasmic. A helical membrane pass occupies residues M571–L594. Residues K595–K605 lie on the Extracellular side of the membrane. Residues V606–F626 traverse the membrane as a helical segment. The Cytoplasmic segment spans residues T627–C696. 2 S-palmitoyl cysteine lipidation sites follow: C643 and C644.

This sequence belongs to the G-protein coupled receptor 1 family. FSH/LSH/TSH subfamily. Sulfated.

Its subcellular location is the cell membrane. Receptor for lutropin-choriogonadotropic hormone. The activity of this receptor is mediated by G proteins which activate adenylate cyclase. The polypeptide is Lutropin-choriogonadotropic hormone receptor (LHCGR) (Sus scrofa (Pig)).